The following is a 220-amino-acid chain: Metalloproteinase inhibitor 2 (220 aa).

A signal peptide spans 1 to 26 (MGATARSLRLALGLLLLGTLPRGADA). Position 27 (Cys27) interacts with Zn(2+). Involved in metalloproteinase-binding stretches follow at residues 27-30 (CSCS) and 95-96 (SA). Disulfide bonds link Cys27–Cys98, Cys29–Cys127, Cys39–Cys152, Cys154–Cys201, Cys159–Cys164, and Cys172–Cys193. Positions 27-152 (CSCSPVHPQQ…SLNHRYQMGC (126 aa)) constitute an NTR domain.

It belongs to the protease inhibitor I35 (TIMP) family. In terms of assembly, interacts (via the C-terminal) with MMP2 (via the C-terminal PEX domain); the interaction inhibits the MMP2 activity. In terms of processing, the activity of TIMP2 is dependent on the presence of disulfide bonds. In terms of tissue distribution, predominantly expressed in the lung in alveolar macrophages and epithelial cells. Also found in brain, kidney, intestine, spleen and heart.

Its subcellular location is the secreted. Functionally, complexes with metalloproteinases (such as collagenases) and irreversibly inactivates them by binding to their catalytic zinc cofactor. This chain is Metalloproteinase inhibitor 2 (TIMP2), found in Cavia porcellus (Guinea pig).